A 575-amino-acid polypeptide reads, in one-letter code: Serine/threonine-protein kinase YPK1 (575 aa).

The tract at residues 1-53 is disordered; that stretch reads MMSWKFGKKFKEGGFLSGKHHSSNNNSPSDTSRSTTPTPGNPHPEDAVKPPVP. Positions 23-38 are enriched in low complexity; sequence SNNNSPSDTSRSTTPT. The region spanning 245–500 is the Protein kinase domain; it reads FELLKVIGKG…AQDIKNHPFF (256 aa). Residues 251–259 and lysine 274 each bind ATP; that span reads IGKGSFGKV. Aspartate 368 functions as the Proton acceptor in the catalytic mechanism. The 72-residue stretch at 502–573 folds into the AGC-kinase C-terminal domain; the sequence is KHINFTKLWN…SVSPLGESVG (72 aa). 2 positions are modified to phosphoserine: serine 543 and serine 562.

The protein belongs to the protein kinase superfamily. AGC Ser/Thr protein kinase family. RAC subfamily.

It catalyses the reaction L-seryl-[protein] + ATP = O-phospho-L-seryl-[protein] + ADP + H(+). The enzyme catalyses L-threonyl-[protein] + ATP = O-phospho-L-threonyl-[protein] + ADP + H(+). Its function is as follows. Probable serine/threonine-protein kinase which may act in the sphingolipid-mediated signaling pathway. May act downstream of TORC2 (TOR complex 2) and PDK1 to regulate sphingolipid metabolism. This is Serine/threonine-protein kinase YPK1 from Cryptococcus neoformans var. grubii serotype A (strain H99 / ATCC 208821 / CBS 10515 / FGSC 9487) (Filobasidiella neoformans var. grubii).